The chain runs to 532 residues: Berberine bridge enzyme-like 23 (532 aa).

Residues Met-1–Ser-22 form the signal peptide. Cys-36 and Cys-102 form a disulfide bridge. Asn-78 carries an N-linked (GlcNAc...) asparagine glycan. Residues Thr-80–Val-256 form the FAD-binding PCMH-type domain. The segment at residues His-117–Cys-180 is a cross-link (6-(S-cysteinyl)-8alpha-(pros-histidyl)-FAD (His-Cys)). Residues Asn-272 and Asn-487 are each glycosylated (N-linked (GlcNAc...) asparagine).

Belongs to the oxygen-dependent FAD-linked oxidoreductase family. FAD serves as cofactor. Post-translationally, the FAD cofactor is bound via a bicovalent 6-S-cysteinyl, 8alpha-N1-histidyl FAD linkage. As to expression, accumulates in cell walls of etiolated hypocotyls.

Its subcellular location is the secreted. It localises to the cell wall. The sequence is that of Berberine bridge enzyme-like 23 from Arabidopsis thaliana (Mouse-ear cress).